Consider the following 484-residue polypeptide: Pheophytinase, chloroplastic (484 aa).

Residues 1–47 constitute a chloroplast transit peptide; sequence MEIISLNVVPQCSVVTWSSKLATKRLVPNRSSLLFSGVKKSRLVIRS.

The protein belongs to the AB hydrolase superfamily. As to quaternary structure, interacts with HCAR, RCCR, PAO and the LHCII complex. Part of a SGR1-CCE-LHCII complex, which acts in chlorophyll breakdown.

It is found in the plastid. The protein localises to the chloroplast thylakoid membrane. It localises to the chloroplast stroma. Alpha/beta hydrolase dephytylating specifically the Mg-free chlorophyll pigment (pheophytin), yielding pheophorbide. No activity on chlorophyll. Belongs to the chlorophyll catabolic enzymes (CCEs). This is Pheophytinase, chloroplastic (PPH) from Arabidopsis thaliana (Mouse-ear cress).